The sequence spans 434 residues: Probable tRNA pseudouridine synthase D (434 aa).

Aspartate 93 acts as the Nucleophile in catalysis. A TRUD domain is found at 169 to 396; that stretch reads GTPNYFGQQR…SAGSRRAILL (228 aa).

Belongs to the pseudouridine synthase TruD family.

It catalyses the reaction uridine(13) in tRNA = pseudouridine(13) in tRNA. Its function is as follows. Could be responsible for synthesis of pseudouridine from uracil-13 in transfer RNAs. This chain is Probable tRNA pseudouridine synthase D, found in Halobacterium salinarum (strain ATCC 29341 / DSM 671 / R1).